The sequence spans 162 residues: Putative colanic acid biosynthesis acetyltransferase WcaB (162 aa).

This sequence belongs to the transferase hexapeptide repeat family.

It functions in the pathway slime biogenesis; slime polysaccharide biosynthesis. This is Putative colanic acid biosynthesis acetyltransferase WcaB (wcaB) from Escherichia coli O157:H7.